Consider the following 71-residue polypeptide: Small ribosomal subunit protein bS18c (71 aa).

It belongs to the bacterial ribosomal protein bS18 family. In terms of assembly, part of the 30S ribosomal subunit.

The protein localises to the plastid. The protein resides in the cyanelle. The polypeptide is Small ribosomal subunit protein bS18c (rps18) (Cyanophora paradoxa).